Reading from the N-terminus, the 322-residue chain is Ribokinase (322 aa).

Residues 25-27 (MTD), 53-57 (GKGAN), and glutamate 154 contribute to the substrate site. ATP is bound by residues asparagine 199, 235–240 (TLGAEG), and threonine 256. The K(+) site is built by aspartate 263 and threonine 265. ATP-binding positions include 268–269 (GD) and asparagine 295. Substrate is bound at residue aspartate 269. The active-site Proton acceptor is the aspartate 269. Serine 301, alanine 304, glycine 306, and serine 310 together coordinate K(+).

This sequence belongs to the carbohydrate kinase PfkB family. Ribokinase subfamily. In terms of assembly, homodimer. It depends on Mg(2+) as a cofactor.

The protein localises to the cytoplasm. Its subcellular location is the nucleus. The catalysed reaction is D-ribose + ATP = D-ribose 5-phosphate + ADP + H(+). It participates in carbohydrate metabolism; D-ribose degradation; D-ribose 5-phosphate from beta-D-ribopyranose: step 2/2. Its activity is regulated as follows. Activated by a monovalent cation that binds near, but not in, the active site. The most likely occupant of the site in vivo is potassium. Ion binding induces a conformational change that may alter substrate affinity. Competitively inhibited by phosphonoacetic acid, etidronate, 2-carboxethylphosphonic acid, N-(phosphonomethyl)glycine, N-(phosphonomethyl)iminodiacetic acid and clodronate. In terms of biological role, catalyzes the phosphorylation of ribose at O-5 in a reaction requiring ATP and magnesium. The resulting D-ribose-5-phosphate can then be used either for sythesis of nucleotides, histidine, and tryptophan, or as a component of the pentose phosphate pathway. The sequence is that of Ribokinase from Homo sapiens (Human).